Reading from the N-terminus, the 149-residue chain is Large ribosomal subunit protein bL9 (149 aa).

The protein belongs to the bacterial ribosomal protein bL9 family.

Functionally, binds to the 23S rRNA. The chain is Large ribosomal subunit protein bL9 from Legionella pneumophila subsp. pneumophila (strain Philadelphia 1 / ATCC 33152 / DSM 7513).